We begin with the raw amino-acid sequence, 751 residues long: Semaphorin-3C (751 aa).

The signal sequence occupies residues 1–21 (MAFQAVCILVGVFVCSTYVKG). The 484-residue stretch at 28 to 511 (RVYLTFDELR…SNEGLAQVSL (484 aa)) folds into the Sema domain. Residue asparagine 81 is glycosylated (N-linked (GlcNAc...) asparagine). An intrachain disulfide couples cysteine 101 to cysteine 112. N-linked (GlcNAc...) asparagine glycosylation is present at asparagine 123. Cystine bridges form between cysteine 130–cysteine 139, cysteine 266–cysteine 378, and cysteine 290–cysteine 338. An N-linked (GlcNAc...) asparagine glycan is attached at asparagine 268. Residue asparagine 465 is glycosylated (N-linked (GlcNAc...) asparagine). Cysteine 514 and cysteine 532 are joined by a disulfide. An Ig-like C2-type domain is found at 571–655 (AYRNAAEIVQ…TENSFKQTIA (85 aa)). Residues asparagine 585 and asparagine 586 are each glycosylated (N-linked (GlcNAc...) asparagine). Cysteines 592 and 643 form a disulfide. The span at 712-731 (TRQQHQQGEESQKMRGDYGK) shows a compositional bias: basic and acidic residues. Positions 712-751 (TRQQHQQGEESQKMRGDYGKLKALINSRKSRNRRNQLPES) are disordered.

This sequence belongs to the semaphorin family. Interacts with PLXND1.

The protein localises to the secreted. Its function is as follows. Binds to plexin family members and plays an important role in the regulation of developmental processes. Required for normal cardiovascular development during embryogenesis. Functions as attractant for growing axons, and thereby plays an important role in axon growth and axon guidance. The protein is Semaphorin-3C (SEMA3C) of Bos taurus (Bovine).